The chain runs to 539 residues: Chaperonin GroEL (539 aa).

Residues 29-32 (TLGP), 86-90 (DGTTT), glycine 413, and aspartate 494 contribute to the ATP site.

It belongs to the chaperonin (HSP60) family. As to quaternary structure, forms a cylinder of 14 subunits composed of two heptameric rings stacked back-to-back. Interacts with the co-chaperonin GroES.

The protein localises to the cytoplasm. The catalysed reaction is ATP + H2O + a folded polypeptide = ADP + phosphate + an unfolded polypeptide.. Together with its co-chaperonin GroES, plays an essential role in assisting protein folding. The GroEL-GroES system forms a nano-cage that allows encapsulation of the non-native substrate proteins and provides a physical environment optimized to promote and accelerate protein folding. The chain is Chaperonin GroEL from Finegoldia magna (strain ATCC 29328 / DSM 20472 / WAL 2508) (Peptostreptococcus magnus).